Consider the following 92-residue polypeptide: Transcription factor PRE1 (92 aa).

Positions 4-59 (RRSRQSSSAPRISDNQMIDLVSKLRQILPEIGQRRRSDKASASKVLQETCNYIRNL) constitute a bHLH domain.

In terms of assembly, interacts with IBH1 and HFR1. As to expression, expressed in roots, leaves, stems and flowers.

The protein localises to the nucleus. Atypical and probable non DNA-binding bHLH transcription factor that integrates multiple signaling pathways to regulate cell elongation and plant development. Binds IBH1, forming a pair of antagonistic bHLH transcription factors that function downstream of BZR1 to mediate brassinosteroid regulation of cell elongation. Regulates light responses by binding and inhibiting the activity of the bHLH transcription factor HFR1, a critical regulator of light signaling and shade avoidance. May have a regulatory role in various aspects of gibberellin-dependent growth and development. The polypeptide is Transcription factor PRE1 (PRE1) (Arabidopsis thaliana (Mouse-ear cress)).